The chain runs to 420 residues: Tol-Pal system protein TolB (420 aa).

The signal sequence occupies residues 1–21; that stretch reads MKLFVHLVLFISLFIPYFTKA.

Belongs to the TolB family. As to quaternary structure, the Tol-Pal system is composed of five core proteins: the inner membrane proteins TolA, TolQ and TolR, the periplasmic protein TolB and the outer membrane protein Pal. They form a network linking the inner and outer membranes and the peptidoglycan layer.

The protein localises to the periplasm. Functionally, part of the Tol-Pal system, which plays a role in outer membrane invagination during cell division and is important for maintaining outer membrane integrity. This chain is Tol-Pal system protein TolB, found in Wolbachia pipientis wMel.